The chain runs to 247 residues: Fasciclin-like arabinogalactan protein 6 (247 aa).

An N-terminal signal peptide occupies residues 1-23 (MSSSLFSYVVLLIFLFTIPYIQS). In terms of domain architecture, FAS1 spans 36–182 (PINLTAILEA…LAVYVVDSVL (147 aa)). Residues N38, N57, N70, N142, and N153 are each glycosylated (N-linked (GlcNAc...) asparagine). Residues 192–212 (TTPTGAPAPKSSTSSSDADSP) are compositionally biased toward low complexity. The interval 192 to 221 (TTPTGAPAPKSSTSSSDADSPAADDEHKSA) is disordered. Residue G222 is the site of GPI-anchor amidated glycine attachment. The propeptide at 223–247 (SSVKRTSLGIVVSFALFCCSVIYIA) is removed in mature form.

Belongs to the fasciclin-like AGP family.

Its subcellular location is the cell membrane. Its function is as follows. May be a cell surface adhesion protein. The chain is Fasciclin-like arabinogalactan protein 6 (FLA6) from Arabidopsis thaliana (Mouse-ear cress).